The sequence spans 28 residues: Seed allergenic protein 1 (28 aa).

Residues 1–28 are disordered; sequence VTXEEGXYSISDQSKVGEQXIRSPDREM.

The protein is Seed allergenic protein 1 of Prunus dulcis (Almond).